Here is a 547-residue protein sequence, read N- to C-terminus: Probable bifunctional tRNA threonylcarbamoyladenosine biosynthesis protein (547 aa).

The kae1 stretch occupies residues 1 to 329 (MKKTFILGIE…FRTDDVKVTW (329 aa)). The Fe cation site is built by histidine 113, histidine 117, and tyrosine 134. Residues 134–138 (YVSGA), aspartate 166, glycine 179, glutamate 183, and asparagine 262 each bind L-threonylcarbamoyladenylate. Aspartate 290 contacts Fe cation. Positions 340 to 547 (EISPETFFRM…EEIKKRARYA (208 aa)) constitute a Protein kinase domain. ATP contacts are provided by residues 355–363 (LDNGAEAVV) and lysine 377. Aspartate 464 functions as the Proton acceptor; for kinase activity in the catalytic mechanism.

The protein in the N-terminal section; belongs to the KAE1 / TsaD family. It in the C-terminal section; belongs to the protein kinase superfamily. Tyr protein kinase family. BUD32 subfamily. As to quaternary structure, component of the KEOPS complex that consists of Kae1, Bud32, Cgi121 and Pcc1; the whole complex dimerizes. It depends on Fe(2+) as a cofactor.

Its subcellular location is the cytoplasm. It catalyses the reaction L-seryl-[protein] + ATP = O-phospho-L-seryl-[protein] + ADP + H(+). The catalysed reaction is L-threonyl-[protein] + ATP = O-phospho-L-threonyl-[protein] + ADP + H(+). It carries out the reaction L-threonylcarbamoyladenylate + adenosine(37) in tRNA = N(6)-L-threonylcarbamoyladenosine(37) in tRNA + AMP + H(+). In terms of biological role, required for the formation of a threonylcarbamoyl group on adenosine at position 37 (t(6)A37) in tRNAs that read codons beginning with adenine. Is a component of the KEOPS complex that is probably involved in the transfer of the threonylcarbamoyl moiety of threonylcarbamoyl-AMP (TC-AMP) to the N6 group of A37. The Kae1 domain likely plays a direct catalytic role in this reaction. The Bud32 domain probably displays kinase activity that regulates Kae1 function. The sequence is that of Probable bifunctional tRNA threonylcarbamoyladenosine biosynthesis protein from Methanosarcina mazei (strain ATCC BAA-159 / DSM 3647 / Goe1 / Go1 / JCM 11833 / OCM 88) (Methanosarcina frisia).